A 375-amino-acid chain; its full sequence is Naringenin 7-O-methyltransferase (375 aa).

Substrate is bound at residue 136–142; it reads LNLDKVF. The tract at residues 168–188 is substrate binding; it reads LFQYLGQDGNEPSNTLFNQAM. Residues G219, D242, M263, and K276 each coordinate S-adenosyl-L-methionine. The Proton acceptor role is filled by H280.

It belongs to the class I-like SAM-binding methyltransferase superfamily. Cation-independent O-methyltransferase family. COMT subfamily.

It catalyses the reaction (2S)-naringenin + S-adenosyl-L-methionine = (2S)-sakuranetin + S-adenosyl-L-homocysteine + H(+). Its function is as follows. S-adenosyl-L-methionine-dependent methyltransferase involved in the biosynthesis of the sakuranetin, an inducible defense mechanism of O.sativa against pathogen attack. This chain is Naringenin 7-O-methyltransferase, found in Oryza sativa subsp. japonica (Rice).